We begin with the raw amino-acid sequence, 395 residues long: Multidrug resistance protein MdtL (395 aa).

At 1 to 3 (MKR) the chain is on the cytoplasmic side. Residues 4 to 24 (FLLCSFALVLLYPAGIDMYLV) traverse the membrane as a helical segment. Residues 25–41 (GLPRIAADLNASEAQLH) are Periplasmic-facing. A helical transmembrane segment spans residues 42–62 (IAFSVYLAGMATAMLFAGKIA). Residues 63-68 (DQSGRK) are Cytoplasmic-facing. The chain crosses the membrane as a helical span at residues 69–89 (PVAIVGALVFMMASLLCSRAS). At 90–92 (EGS) the chain is on the periplasmic side. A helical membrane pass occupies residues 93 to 113 (LFLSGRFLQGVGAGGCYVVAF). Residues 114–130 (AILRDTLDEHRRAKVLS) lie on the Cytoplasmic side of the membrane. A helical membrane pass occupies residues 131 to 151 (LLNGITCIVPVLAPVVGHLIM). Residues 152-157 (LRFPWQ) lie on the Periplasmic side of the membrane. A helical membrane pass occupies residues 158–178 (SLFYTMSAMGIIVGLLSLFIL). The Cytoplasmic segment spans residues 179–216 (RETRPVRLAPRDLSRSSPAAESLINRFFVSRLAITTLS). Residues 217 to 237 (VSVILTFVNASPVLLMEVMGF) traverse the membrane as a helical segment. Over 238-246 (SRGDYAITM) the chain is Periplasmic. Residues 247 to 267 (ALTAGVSMVVSFSTPFALGLF) form a helical membrane-spanning segment. The Cytoplasmic segment spans residues 268-270 (KPR). The helical transmembrane segment at 271 to 291 (TLMLVSQGLFLTAGVTLSLAH) threads the bilayer. Topologically, residues 292–294 (TNT) are periplasmic. Residues 295–315 (VTLFGLTLICAGFSVGFGVAM) form a helical membrane-spanning segment. Residues 316–327 (SQALGPFSLRAG) lie on the Cytoplasmic side of the membrane. The chain crosses the membrane as a helical span at residues 328 to 350 (VASSTLGIAQVCGSSLWIWLAAI). The Periplasmic portion of the chain corresponds to 351 to 354 (LGIS). The chain crosses the membrane as a helical span at residues 355-377 (AMNMLIGILIGCSIVSILLIFSV). Topologically, residues 378–395 (TPNRSVAEHEEIPYQSRP) are cytoplasmic.

The protein belongs to the major facilitator superfamily. DHA1 family. MdtL (TC 2.A.1.2.22) subfamily.

The protein localises to the cell inner membrane. The sequence is that of Multidrug resistance protein MdtL (mdtL) from Salmonella typhimurium (strain LT2 / SGSC1412 / ATCC 700720).